Reading from the N-terminus, the 212-residue chain is Deoxyribose-phosphate aldolase (212 aa).

Residue aspartate 90 is the Proton donor/acceptor of the active site. Lysine 151 acts as the Schiff-base intermediate with acetaldehyde in catalysis. Lysine 176 acts as the Proton donor/acceptor in catalysis.

This sequence belongs to the DeoC/FbaB aldolase family. DeoC type 1 subfamily.

Its subcellular location is the cytoplasm. The catalysed reaction is 2-deoxy-D-ribose 5-phosphate = D-glyceraldehyde 3-phosphate + acetaldehyde. It functions in the pathway carbohydrate degradation; 2-deoxy-D-ribose 1-phosphate degradation; D-glyceraldehyde 3-phosphate and acetaldehyde from 2-deoxy-alpha-D-ribose 1-phosphate: step 2/2. Its function is as follows. Catalyzes a reversible aldol reaction between acetaldehyde and D-glyceraldehyde 3-phosphate to generate 2-deoxy-D-ribose 5-phosphate. This chain is Deoxyribose-phosphate aldolase, found in Halobacterium salinarum (strain ATCC 29341 / DSM 671 / R1).